Reading from the N-terminus, the 848-residue chain is Translation initiation factor IF-2 (848 aa).

Basic and acidic residues predominate over residues 1 to 10 (MSENNNDKIT). Disordered regions lie at residues 1 to 79 (MSEN…EKPV) and 121 to 163 (AERQ…LFSS). Residues 17–33 (LKRSGSETNTVKQNFNH) are compositionally biased toward polar residues. A compositionally biased stretch (basic and acidic residues) spans 121-138 (AERQAAEKQAKESEEGLH). Polar residues predominate over residues 149 to 163 (KSSSNTTKPTPLFSS). Residues 346 to 513 (TRPPIVTIMG…AILLQAEILD (168 aa)) enclose the tr-type G domain. Positions 355–362 (GHVDHGKT) are G1. 355-362 (GHVDHGKT) is a binding site for GTP. The segment at 380 to 384 (GITQH) is G2. A G3 region spans residues 401–404 (DTPG). GTP-binding positions include 401–405 (DTPGH) and 455–458 (NKID). A G4 region spans residues 455 to 458 (NKID). Positions 491 to 493 (SAK) are G5.

This sequence belongs to the TRAFAC class translation factor GTPase superfamily. Classic translation factor GTPase family. IF-2 subfamily.

Its subcellular location is the cytoplasm. Its function is as follows. One of the essential components for the initiation of protein synthesis. Protects formylmethionyl-tRNA from spontaneous hydrolysis and promotes its binding to the 30S ribosomal subunits. Also involved in the hydrolysis of GTP during the formation of the 70S ribosomal complex. The protein is Translation initiation factor IF-2 of Bartonella bacilliformis (strain ATCC 35685 / KC583 / Herrer 020/F12,63).